Consider the following 304-residue polypeptide: Murein tetrapeptide carboxypeptidase (304 aa).

Ser-106 serves as the catalytic Nucleophile. Active-site charge relay system residues include Glu-200 and His-270.

Belongs to the peptidase S66 family.

The protein localises to the cytoplasm. The enzyme catalyses N-acetyl-D-glucosaminyl-N-acetylmuramoyl-L-alanyl-meso-2,6-diaminoheptanedioyl-D-alanine + H2O = N-acetyl-D-glucosaminyl-N-acetylmuramoyl-L-alanyl-meso-2,6-diaminoheptanedioate + D-alanine. It participates in cell wall biogenesis; peptidoglycan recycling. Inhibited by beta-lactams containing a D-amino acid side chain. Functionally, releases the terminal D-alanine residue from the cytoplasmic tetrapeptide recycling product L-Ala-gamma-D-Glu-meso-Dap-D-Ala. To a lesser extent, can also cleave D-Ala from murein derivatives containing the tetrapeptide, i.e. MurNAc-tetrapeptide, UDP-MurNAc-tetrapeptide, GlcNAc-MurNAc-tetrapeptide, and GlcNAc-anhMurNAc-tetrapeptide. Does not act on murein sacculi or cross-linked muropeptides. The tripeptides produced by the LcdA reaction can then be reused as peptidoglycan building blocks; LcdA is thereby involved in murein recycling. Is also essential for viability during stationary phase. The chain is Murein tetrapeptide carboxypeptidase (ldcA) from Escherichia coli (strain K12).